A 330-amino-acid chain; its full sequence is tRNA U34 carboxymethyltransferase (330 aa).

Residues K91, W105, K110, G130, 152 to 154 (DPS), 181 to 182 (IE), M196, Y200, and R315 contribute to the carboxy-S-adenosyl-L-methionine site.

Belongs to the class I-like SAM-binding methyltransferase superfamily. CmoB family. Homotetramer.

It catalyses the reaction carboxy-S-adenosyl-L-methionine + 5-hydroxyuridine(34) in tRNA = 5-carboxymethoxyuridine(34) in tRNA + S-adenosyl-L-homocysteine + H(+). Functionally, catalyzes carboxymethyl transfer from carboxy-S-adenosyl-L-methionine (Cx-SAM) to 5-hydroxyuridine (ho5U) to form 5-carboxymethoxyuridine (cmo5U) at position 34 in tRNAs. The polypeptide is tRNA U34 carboxymethyltransferase (Shewanella pealeana (strain ATCC 700345 / ANG-SQ1)).